We begin with the raw amino-acid sequence, 338 residues long: Holliday junction branch migration complex subunit RuvB (338 aa).

Residues 4–187 form a large ATPase domain (RuvB-L) region; it reads ADKDRLVSGD…FGISEHMAYY (184 aa). ATP contacts are provided by residues Leu-26, Arg-27, Gly-68, Lys-71, Thr-72, Thr-73, 134–136, Arg-177, Tyr-187, and Arg-224; that span reads EDF. Thr-72 contacts Mg(2+). Residues 188 to 258 are small ATPAse domain (RuvB-S); it reads SADDLSEIVK…MVDHALDQLQ (71 aa). Residues 261 to 338 are head domain (RuvB-H); it reads QQGLDQIDRK…AHMGMSAEQH (78 aa). DNA-binding residues include Arg-316 and Arg-321.

The protein belongs to the RuvB family. As to quaternary structure, homohexamer. Forms an RuvA(8)-RuvB(12)-Holliday junction (HJ) complex. HJ DNA is sandwiched between 2 RuvA tetramers; dsDNA enters through RuvA and exits via RuvB. An RuvB hexamer assembles on each DNA strand where it exits the tetramer. Each RuvB hexamer is contacted by two RuvA subunits (via domain III) on 2 adjacent RuvB subunits; this complex drives branch migration. In the full resolvosome a probable DNA-RuvA(4)-RuvB(12)-RuvC(2) complex forms which resolves the HJ.

The protein resides in the cytoplasm. It carries out the reaction ATP + H2O = ADP + phosphate + H(+). The RuvA-RuvB-RuvC complex processes Holliday junction (HJ) DNA during genetic recombination and DNA repair, while the RuvA-RuvB complex plays an important role in the rescue of blocked DNA replication forks via replication fork reversal (RFR). RuvA specifically binds to HJ cruciform DNA, conferring on it an open structure. The RuvB hexamer acts as an ATP-dependent pump, pulling dsDNA into and through the RuvAB complex. RuvB forms 2 homohexamers on either side of HJ DNA bound by 1 or 2 RuvA tetramers; 4 subunits per hexamer contact DNA at a time. Coordinated motions by a converter formed by DNA-disengaged RuvB subunits stimulates ATP hydrolysis and nucleotide exchange. Immobilization of the converter enables RuvB to convert the ATP-contained energy into a lever motion, pulling 2 nucleotides of DNA out of the RuvA tetramer per ATP hydrolyzed, thus driving DNA branch migration. The RuvB motors rotate together with the DNA substrate, which together with the progressing nucleotide cycle form the mechanistic basis for DNA recombination by continuous HJ branch migration. Branch migration allows RuvC to scan DNA until it finds its consensus sequence, where it cleaves and resolves cruciform DNA. This is Holliday junction branch migration complex subunit RuvB from Lacticaseibacillus paracasei (strain ATCC 334 / BCRC 17002 / CCUG 31169 / CIP 107868 / KCTC 3260 / NRRL B-441) (Lactobacillus paracasei).